A 264-amino-acid chain; its full sequence is Triosephosphate isomerase (264 aa).

13 to 15 is a substrate binding site; sequence NWK. Catalysis depends on histidine 106, which acts as the Electrophile. Glutamate 179 serves as the catalytic Proton acceptor. Residues glycine 185, serine 223, and 244–245 contribute to the substrate site; that span reads GG.

Belongs to the triosephosphate isomerase family. In terms of assembly, homodimer.

The protein resides in the cytoplasm. It catalyses the reaction D-glyceraldehyde 3-phosphate = dihydroxyacetone phosphate. It functions in the pathway carbohydrate biosynthesis; gluconeogenesis. It participates in carbohydrate degradation; glycolysis; D-glyceraldehyde 3-phosphate from glycerone phosphate: step 1/1. Involved in the gluconeogenesis. Catalyzes stereospecifically the conversion of dihydroxyacetone phosphate (DHAP) to D-glyceraldehyde-3-phosphate (G3P). This is Triosephosphate isomerase from Acinetobacter baumannii (strain AB0057).